Consider the following 543-residue polypeptide: CTP synthase (543 aa).

Residues 1 to 265 (MARYIFITGG…DEEVLAAFGI (265 aa)) form an amidoligase domain region. CTP is bound at residue S13. S13 contributes to the UTP binding site. 14–19 (SLGKGL) is a binding site for ATP. Y54 contacts L-glutamine. An ATP-binding site is contributed by D71. Residues D71 and E139 each contribute to the Mg(2+) site. CTP-binding positions include 146-148 (DIE), 186-191 (KTKPTQ), and K222. UTP contacts are provided by residues 186 to 191 (KTKPTQ) and K222. Residue 238-240 (RDA) coordinates ATP. Positions 291–542 (TIAIVGKYTG…IEAAMAQSRL (252 aa)) constitute a Glutamine amidotransferase type-1 domain. L-glutamine is bound at residue G353. C380 acts as the Nucleophile; for glutamine hydrolysis in catalysis. L-glutamine is bound by residues 381–384 (FGMQ), E404, and R470. Catalysis depends on residues H515 and E517.

This sequence belongs to the CTP synthase family. In terms of assembly, homotetramer.

It catalyses the reaction UTP + L-glutamine + ATP + H2O = CTP + L-glutamate + ADP + phosphate + 2 H(+). The enzyme catalyses L-glutamine + H2O = L-glutamate + NH4(+). It carries out the reaction UTP + NH4(+) + ATP = CTP + ADP + phosphate + 2 H(+). Its pathway is pyrimidine metabolism; CTP biosynthesis via de novo pathway; CTP from UDP: step 2/2. With respect to regulation, allosterically activated by GTP, when glutamine is the substrate; GTP has no effect on the reaction when ammonia is the substrate. The allosteric effector GTP functions by stabilizing the protein conformation that binds the tetrahedral intermediate(s) formed during glutamine hydrolysis. Inhibited by the product CTP, via allosteric rather than competitive inhibition. Its function is as follows. Catalyzes the ATP-dependent amination of UTP to CTP with either L-glutamine or ammonia as the source of nitrogen. Regulates intracellular CTP levels through interactions with the four ribonucleotide triphosphates. The sequence is that of CTP synthase from Rhodopseudomonas palustris (strain BisA53).